We begin with the raw amino-acid sequence, 377 residues long: Succinyl-diaminopimelate desuccinylase (377 aa).

Position 66 (His66) interacts with Zn(2+). The active site involves Asp68. Asp99 lines the Zn(2+) pocket. The Proton acceptor role is filled by Glu133. Glu134, Glu162, and His348 together coordinate Zn(2+).

It belongs to the peptidase M20A family. DapE subfamily. In terms of assembly, homodimer. Requires Zn(2+) as cofactor. Co(2+) serves as cofactor.

The enzyme catalyses N-succinyl-(2S,6S)-2,6-diaminopimelate + H2O = (2S,6S)-2,6-diaminopimelate + succinate. The protein operates within amino-acid biosynthesis; L-lysine biosynthesis via DAP pathway; LL-2,6-diaminopimelate from (S)-tetrahydrodipicolinate (succinylase route): step 3/3. Catalyzes the hydrolysis of N-succinyl-L,L-diaminopimelic acid (SDAP), forming succinate and LL-2,6-diaminopimelate (DAP), an intermediate involved in the bacterial biosynthesis of lysine and meso-diaminopimelic acid, an essential component of bacterial cell walls. The polypeptide is Succinyl-diaminopimelate desuccinylase (Xylella fastidiosa (strain M12)).